We begin with the raw amino-acid sequence, 459 residues long: uncharacterized protein (459 aa).

The B12-binding domain occupies 13 to 145 (TESAIKRVVG…DALSKGRELK (133 aa)). In terms of domain architecture, Radical SAM core spans 188–402 (ADGVPFGVVM…MNWRKYTTID (215 aa)). The [4Fe-4S] cluster site is built by C202, C206, and C209.

It belongs to the methyltransferase superfamily. The cofactor is [4Fe-4S] cluster.

This is an uncharacterized protein from Pyrococcus horikoshii (strain ATCC 700860 / DSM 12428 / JCM 9974 / NBRC 100139 / OT-3).